A 576-amino-acid chain; its full sequence is Alkaline phosphatase PhoD (576 aa).

The signal sequence occupies residues Met1 to Ala32. Residues Asp68 and Thr107 each coordinate Zn(2+). The active-site Phosphothreonine intermediate is Thr107. Cys108 and Cys144 are joined by a disulfide. Residues Asn128 and Lys188 to Arg190 each bind substrate. Residues Cys248 and Cys332 are joined by a disulfide bond. Positions 318, 322, 363, 364, and 508 each coordinate Zn(2+). Cys562 and Cys573 form a disulfide bridge.

As to quaternary structure, monomer. Zn(2+) is required as a cofactor.

The enzyme catalyses a phosphate monoester + H2O = an alcohol + phosphate. Functionally, alkaline phosphatase with broad substrate specificity. Has phosphatase activity towards nucleotide and sugar phosphates with a preference to nucleotide phosphates. Has no phosphodiesterase activity. This Zymomonas mobilis subsp. mobilis (strain ATCC 31821 / ZM4 / CP4) protein is Alkaline phosphatase PhoD.